We begin with the raw amino-acid sequence, 874 residues long: Alanine--tRNA ligase (874 aa).

Zn(2+) contacts are provided by His562, His566, Cys665, and His669.

It belongs to the class-II aminoacyl-tRNA synthetase family. It depends on Zn(2+) as a cofactor.

Its subcellular location is the cytoplasm. It catalyses the reaction tRNA(Ala) + L-alanine + ATP = L-alanyl-tRNA(Ala) + AMP + diphosphate. Functionally, catalyzes the attachment of alanine to tRNA(Ala) in a two-step reaction: alanine is first activated by ATP to form Ala-AMP and then transferred to the acceptor end of tRNA(Ala). Also edits incorrectly charged Ser-tRNA(Ala) and Gly-tRNA(Ala) via its editing domain. The sequence is that of Alanine--tRNA ligase from Pseudomonas putida (strain ATCC 47054 / DSM 6125 / CFBP 8728 / NCIMB 11950 / KT2440).